Reading from the N-terminus, the 177-residue chain is von Ebner gland protein 1 (177 aa).

Residues 1 to 18 (MKALLLTFGLSLLAALQA) form the signal peptide. Cys-80 and Cys-172 are oxidised to a cystine.

It belongs to the calycin superfamily. Lipocalin family. Homodimer.

Its subcellular location is the secreted. In terms of biological role, could play a role in taste reception. Could be necessary for the concentration and delivery of sapid molecules in the gustatory system. This chain is von Ebner gland protein 1 (Vegp1), found in Rattus norvegicus (Rat).